A 436-amino-acid chain; its full sequence is Glutamyl-tRNA reductase (436 aa).

Residues 49–52 (TCNR), serine 109, 114–116 (EGQ), and glutamine 120 each bind substrate. Cysteine 50 serves as the catalytic Nucleophile. 198–203 (GAGRMS) provides a ligand contact to NADP(+).

It belongs to the glutamyl-tRNA reductase family. As to quaternary structure, homodimer.

It catalyses the reaction (S)-4-amino-5-oxopentanoate + tRNA(Glu) + NADP(+) = L-glutamyl-tRNA(Glu) + NADPH + H(+). It functions in the pathway porphyrin-containing compound metabolism; protoporphyrin-IX biosynthesis; 5-aminolevulinate from L-glutamyl-tRNA(Glu): step 1/2. It participates in porphyrin-containing compound metabolism; chlorophyll biosynthesis. Functionally, catalyzes the NADPH-dependent reduction of glutamyl-tRNA(Glu) to glutamate 1-semialdehyde (GSA). This Prochlorococcus marinus (strain MIT 9215) protein is Glutamyl-tRNA reductase.